Here is a 201-residue protein sequence, read N- to C-terminus: Peptidyl-tRNA hydrolase (201 aa).

Tyrosine 15 lines the tRNA pocket. The Proton acceptor role is filled by histidine 20. TRNA is bound by residues tyrosine 66, asparagine 68, and asparagine 114.

The protein belongs to the PTH family. As to quaternary structure, monomer.

Its subcellular location is the cytoplasm. The catalysed reaction is an N-acyl-L-alpha-aminoacyl-tRNA + H2O = an N-acyl-L-amino acid + a tRNA + H(+). Functionally, hydrolyzes ribosome-free peptidyl-tRNAs (with 1 or more amino acids incorporated), which drop off the ribosome during protein synthesis, or as a result of ribosome stalling. Catalyzes the release of premature peptidyl moieties from peptidyl-tRNA molecules trapped in stalled 50S ribosomal subunits, and thus maintains levels of free tRNAs and 50S ribosomes. This is Peptidyl-tRNA hydrolase from Burkholderia thailandensis (strain ATCC 700388 / DSM 13276 / CCUG 48851 / CIP 106301 / E264).